Consider the following 484-residue polypeptide: 1,4-beta-D-glucan cellobiohydrolase CEL6A (484 aa).

Positions 1–17 (MAKRLLLTAALAATTLA) are cleaved as a signal peptide. In terms of domain architecture, CBM1 spans 26–62 (NCGSVWSQCGGQGWTGATCCASGSTCVAQNQWYSQCL). Cystine bridges form between cysteine 34–cysteine 51 and cysteine 45–cysteine 61. Residues 68-98 (TTTAQAPSSTRTTTSSSSRPTSSSISTSAVN) are disordered. Tryptophan 171 and aspartate 173 together coordinate substrate. Asparagine 175 is a glycosylation site (N-linked (GlcNAc...) asparagine). Positions 208 to 230 (YDLPDRDCAAAASNGEWAIADGG) are substrate binding loop 1. The active-site Proton donor is aspartate 260. 6 residues coordinate substrate: histidine 305, tryptophan 308, asparagine 344, tryptophan 405, lysine 433, and glutamate 437. Residues 431–469 (WIKPGGECDGTSDTTAARYDHHCGFADALKPAPEAGQWF) form a substrate binding loop 2 region. Aspartate 439 (proton acceptor) is an active-site residue.

This sequence belongs to the glycosyl hydrolase 6 (cellulase B) family. As to quaternary structure, monomer. Post-translationally, both N- and O-glycosylated.

Its subcellular location is the secreted. It catalyses the reaction Hydrolysis of (1-&gt;4)-beta-D-glucosidic linkages in cellulose and cellotetraose, releasing cellobiose from the non-reducing ends of the chains.. Functionally, exoglucanase that plays an important function in biomass degradation by catalyzing the hydrolysis of the non-reducing end beta-1,4-glucosidic linkages in cellulose and cellotetraose to release cellobiose. Hydrolyzes crystalline and amorphous cellulose but is inactive on hydroxyethyl cellulose, mannan, galactomannan, xyloglucan, arabinoxylan, arabinan, xylan, and pectin. This Podospora anserina (strain S / ATCC MYA-4624 / DSM 980 / FGSC 10383) (Pleurage anserina) protein is 1,4-beta-D-glucan cellobiohydrolase CEL6A.